Consider the following 218-residue polypeptide: N-(5'-phosphoribosyl)anthranilate isomerase (218 aa).

It belongs to the TrpF family.

The catalysed reaction is N-(5-phospho-beta-D-ribosyl)anthranilate = 1-(2-carboxyphenylamino)-1-deoxy-D-ribulose 5-phosphate. The protein operates within amino-acid biosynthesis; L-tryptophan biosynthesis; L-tryptophan from chorismate: step 3/5. This Acetivibrio thermocellus (strain ATCC 27405 / DSM 1237 / JCM 9322 / NBRC 103400 / NCIMB 10682 / NRRL B-4536 / VPI 7372) (Clostridium thermocellum) protein is N-(5'-phosphoribosyl)anthranilate isomerase.